Consider the following 261-residue polypeptide: MEADGLGCAVCVLTGASRGFGRALAPQLARLLSPGSVMLVSARSESMLRQLKEELGAQQPDLKVVLAAADLGTEAGVQRLLSAVRELPRPEGLQRLLLINNAATLGDVSKGFLNVNDLAEVNNYWALNLTSMLCLTSGTLNAFQDSPGLSKTVVNISSLCALQPYKGWGLYCAGKAARDMLYQVLAAEEPSVRVLSYAPGPLDNDMQQLARETSKDPELRSKLQKLKSDGALVDCGTSAQKLLGLLQKDTFQSGAHVDFYD.

Methionine 1 is modified (N-acetylmethionine). An NADP(+)-binding site is contributed by 15–21 (GASRGFG). Serine 33 bears the Phosphoserine mark. 43–44 (RS) contributes to the NADP(+) binding site. Serine 46 carries the post-translational modification Phosphoserine. NADP(+) is bound at residue 70–71 (DL). Substrate contacts are provided by residues 158–159 (SL) and tyrosine 171. Residue lysine 175 coordinates NADP(+). At serine 196 the chain carries Phosphoserine. Glycine 200 is a substrate binding site. NADP(+) is bound at residue 202 to 207 (LDNDMQ). Serine 214 is subject to Phosphoserine. Substrate is bound by residues lysine 222 and aspartate 258.

The protein belongs to the sepiapterin reductase family. As to quaternary structure, homodimer.

Its subcellular location is the cytoplasm. The enzyme catalyses L-erythro-7,8-dihydrobiopterin + NADP(+) = L-sepiapterin + NADPH + H(+). It catalyses the reaction (6R)-L-erythro-5,6,7,8-tetrahydrobiopterin + 2 NADP(+) = 6-pyruvoyl-5,6,7,8-tetrahydropterin + 2 NADPH + 2 H(+). Its function is as follows. Catalyzes the final one or two reductions in tetra-hydrobiopterin biosynthesis to form 5,6,7,8-tetrahydrobiopterin. The polypeptide is Sepiapterin reductase (Spr) (Mus musculus (Mouse)).